The chain runs to 371 residues: Macronuclear solute carrier homolog CR-MSC (371 aa).

Solcar repeat units follow at residues 16-111 (RMNY…FYDK), 120-208 (ARPD…CKEN), and 215-304 (PHWI…LSQF). 6 helical membrane-spanning segments follow: residues 22–42 (FAAANVIALITHAATQPLDMV), 89–109 (TFFFRTVCYTTARVTAFGYFY), 126–146 (VAAGVLGGFIAGVVTNPIDIV), 184–204 (AGANGFKLAAICSSMTNIYDW), 221–241 (LWGTAVAVAIGTVVSMPFDMI), and 281–301 (FGSFYAGGEAYFLRLFLICYL).

The protein belongs to the mitochondrial carrier (TC 2.A.29) family.

Its subcellular location is the membrane. In Oxytricha fallax, this protein is Macronuclear solute carrier homolog CR-MSC.